A 156-amino-acid polypeptide reads, in one-letter code: Ecotin (156 aa).

Positions methionine 1 to alanine 19 are cleaved as a signal peptide. Cysteines 65 and 102 form a disulfide.

The protein belongs to the protease inhibitor I11 (ecotin) family. Homodimer.

It is found in the periplasm. Its function is as follows. General inhibitor of family S1 serine proteases. The protein is Ecotin of Pseudomonas aeruginosa (strain LESB58).